We begin with the raw amino-acid sequence, 185 residues long: Hypoxanthine/guanine phosphoribosyltransferase (185 aa).

The protein belongs to the purine/pyrimidine phosphoribosyltransferase family. Archaeal HPRT subfamily. As to quaternary structure, homodimer.

The protein localises to the cytoplasm. It catalyses the reaction IMP + diphosphate = hypoxanthine + 5-phospho-alpha-D-ribose 1-diphosphate. The catalysed reaction is GMP + diphosphate = guanine + 5-phospho-alpha-D-ribose 1-diphosphate. It functions in the pathway purine metabolism; IMP biosynthesis via salvage pathway; IMP from hypoxanthine: step 1/1. Its function is as follows. Catalyzes a salvage reaction resulting in the formation of IMP that is energically less costly than de novo synthesis. This chain is Hypoxanthine/guanine phosphoribosyltransferase, found in Methanococcus maripaludis (strain C5 / ATCC BAA-1333).